Consider the following 154-residue polypeptide: Myoglobin (154 aa).

The Globin domain occupies glycine 2 to lysine 148. Position 4 is a phosphoserine (serine 4). Residue histidine 65 participates in nitrite binding. Histidine 65 is an O2 binding site. Threonine 68 is modified (phosphothreonine). Histidine 94 provides a ligand contact to heme b.

This sequence belongs to the globin family. As to quaternary structure, monomeric.

It is found in the cytoplasm. The protein localises to the sarcoplasm. The catalysed reaction is Fe(III)-heme b-[protein] + nitric oxide + H2O = Fe(II)-heme b-[protein] + nitrite + 2 H(+). The enzyme catalyses H2O2 + AH2 = A + 2 H2O. Functionally, monomeric heme protein which primary function is to store oxygen and facilitate its diffusion within muscle tissues. Reversibly binds oxygen through a pentacoordinated heme iron and enables its timely and efficient release as needed during periods of heightened demand. Depending on the oxidative conditions of tissues and cells, and in addition to its ability to bind oxygen, it also has a nitrite reductase activity whereby it regulates the production of bioactive nitric oxide. Under stress conditions, like hypoxia and anoxia, it also protects cells against reactive oxygen species thanks to its pseudoperoxidase activity. This chain is Myoglobin (MB), found in Sciurus vulgaris (Eurasian red squirrel).